We begin with the raw amino-acid sequence, 84 residues long: M-myrmeciitoxin-Mb2a (84 aa).

Residues 1–21 (MKLSCLLLTLAIIFVLTIVHA) form the signal peptide. The propeptide occupies 22–48 (PNVKAKALADPESDAVGFADAVGEADP).

The protein belongs to the formicidae venom precursor-01 superfamily. Ant pilosulin family. As to expression, expressed by the venom gland.

It localises to the secreted. Its function is as follows. Shows activity against E.coli and S.aureus (MIC&lt;6.25 uM), moderate activity against P.aeruginosa (MIC&lt;25 uM), weak activity against B.subtilis (MIC&lt;50 uM), and has no effect against L.garvieae, C.albicans, and S.cerevisiae. Has no hemolytic nor cytolytic activity. Causes an IgE-independent histamine release. This chain is M-myrmeciitoxin-Mb2a, found in Myrmecia banksi (Jack jumper ant).